The sequence spans 492 residues: Serine incorporator 4 (492 aa).

10 helical membrane passes run 58-78 (FYIL…SKTV), 113-133 (AVYR…VLLV), 148-168 (SFWS…FCIP), 179-199 (IGIC…TAFA), 217-237 (FLGV…GAVL), 254-274 (LLSL…APCI), 281-301 (SGLL…FSAL), 330-350 (IPDA…VLFA), 421-441 (GFHF…TNWF), and 464-484 (VASC…PLLA).

Belongs to the TDE1 family.

It localises to the membrane. Functionally, incorporates a polar amino acid serine into membranes and facilitates the synthesis of two serine-derived lipids, phosphatidylserine and sphingolipids. This chain is Serine incorporator 4 (Serinc4), found in Rattus norvegicus (Rat).